The following is a 619-amino-acid chain: Cationic amino acid transporter 3 (619 aa).

Residues 1–36 are Cytoplasmic-facing; sequence MPWQAFRRFGQKLVRRRTLESGMAETRLARCLSTLD. Residues 37–57 traverse the membrane as a helical segment; that stretch reads LVALGVGSTLGAGVYVLAGEV. Over 58–61 the chain is Extracellular; sequence AKDK. Residues 62–82 traverse the membrane as a helical segment; sequence AGPSIVICFLVAALSSVLAGL. At 83–107 the chain is on the cytoplasmic side; sequence CYAEFGARVPRSGSAYLYSYVTVGE. The chain crosses the membrane as a helical span at residues 108-128; it reads LWAFTTGWNLILSYVIGTASV. The Extracellular portion of the chain corresponds to 129 to 162; the sequence is ARAWSSAFDNLIGNHISKTLQGSIALHVPHVLAE. The chain crosses the membrane as a helical span at residues 163 to 183; sequence YPDFFALGLVLLLTGLLALGA. The Cytoplasmic segment spans residues 184 to 191; that stretch reads SESALVTK. The helical transmembrane segment at 192 to 212 threads the bilayer; it reads VFTGVNLLVLGFVMISGFVKG. Over 213-233 the chain is Extracellular; it reads DVHNWKLTEEDYELAMAELND. The N-linked (GlcNAc...) asparagine glycan is linked to Asn232. The chain crosses the membrane as a helical span at residues 234 to 254; the sequence is TYSLGPLGSGGFVPFGFEGIL. Residues 255–285 are Cytoplasmic-facing; it reads RGAATCFYAFVGFDCIATTGEEAQNPQRSIP. Residues 286–306 form a helical membrane-spanning segment; it reads MGIVISLSVCFLAYFAVSSAL. Over 307–335 the chain is Extracellular; sequence TLMMPYYQLQPESPLPEAFLYIGWAPARY. A helical transmembrane segment spans residues 336-356; that stretch reads VVAVGSLCALSTSLLGSMFPM. At 357-382 the chain is on the cytoplasmic side; that stretch reads PRVIYAMAEDGLLFRVLARIHTGTRT. A helical membrane pass occupies residues 383 to 403; the sequence is PIIATVVSGIIAAFMAFLFKL. Over 404 to 406 the chain is Extracellular; sequence TDL. The chain crosses the membrane as a helical span at residues 407–427; that stretch reads VDLMSIGTLLAYSLVSICVLI. Residues 428–475 are Cytoplasmic-facing; the sequence is LRYQPDQETKTGEEVELQEEAITTESEKLTLWGLFFPLNSIPTPLSGQ. Residues 476-496 traverse the membrane as a helical segment; the sequence is IVYVCSSLLAVLLTALCLVLA. The Extracellular segment spans residues 497-506; the sequence is QWSVPLLSGD. Residues 507–527 traverse the membrane as a helical segment; the sequence is LLWTAVVVLLLLLIIGIIVVI. The Cytoplasmic portion of the chain corresponds to 528 to 540; that stretch reads WRQPQSSTPLHFK. A helical membrane pass occupies residues 541 to 561; sequence VPALPLLPLMSIFVNIYLMMQ. Residues 562–569 lie on the Extracellular side of the membrane; sequence MTAGTWAR. Residues 570 to 590 form a helical membrane-spanning segment; it reads FGVWMLIGFAIYFGYGIQHSL. Topologically, residues 591–619 are cytoplasmic; that stretch reads EEIKSNQPSRKSRAKTVDLDPGTLYVHSV. Residue Thr606 is modified to Phosphothreonine. Ser618 is modified (phosphoserine).

The protein belongs to the amino acid-polyamine-organocation (APC) superfamily. Cationic amino acid transporter (CAT) (TC 2.A.3.3) family. In terms of processing, N-glycosylated. In terms of tissue distribution, highly expressed in thymus, uterus and testis. Detected at lower levels in brain, mammary gland, prostate, salivary gland and fetal spleen. In brain, highest expression in thalamus, hippocampus and amygdala.

It localises to the cell membrane. It carries out the reaction L-arginine(in) = L-arginine(out). The enzyme catalyses L-lysine(in) = L-lysine(out). It catalyses the reaction L-ornithine(in) = L-ornithine(out). Uniporter that mediates the uptake of cationic L-amino acids such as L-arginine, L-lysine and L-ornithine. The transport is sodium ions- and pH-independent, moderately trans-stimulated and is mediated by passive diffusion. The chain is Cationic amino acid transporter 3 from Homo sapiens (Human).